The sequence spans 261 residues: Acidic leucine-rich nuclear phosphoprotein 32 family member B (261 aa).

LRR repeat units follow at residues 16–40 (PAAV…LTAE), 43–64 (NLEF…PKLP), 65–87 (KLKK…AEKL), and 89–110 (NLTH…EPLK). Lysine 86 carries the post-translational modification N6-acetyllysine. One can recognise an LRRCT domain in the interval 123–161 (CEVTNLNDYRESVFKLLPQLTYLDGYDREDREAPDSDAE). The tract at residues 149 to 261 (DREDREAPDS…RETDDEGEDD (113 aa)) is disordered. The segment covering 157 to 243 (DSDAEVDGVD…DEDEDEEEEE (87 aa)) has biased composition (acidic residues). Residue serine 158 is modified to Phosphoserine. The segment covering 244–254 (SGKGEGRKRET) has biased composition (basic and acidic residues). Threonine 254 is modified (phosphothreonine).

This sequence belongs to the ANP32 family. As to quaternary structure, monomer. Interacts with histones H3 and H4. In terms of processing, some glutamate residues are glycylated by TTLL8. This modification occurs exclusively on glutamate residues and results in a glycine chain on the gamma-carboxyl group.

Its subcellular location is the nucleus. Its function is as follows. Multifunctional protein working as a cell cycle progression factor as well as a cell survival factor. Required for the progression from the G1 to the S phase. Anti-apoptotic protein which functions as a caspase-3 inhibitor. Has no phosphatase 2A (PP2A) inhibitor activity. Exhibits histone chaperone properties, stimulating core histones to assemble into a nucleosome. The chain is Acidic leucine-rich nuclear phosphoprotein 32 family member B (ANP32B) from Ovis aries (Sheep).